We begin with the raw amino-acid sequence, 179 residues long: ATP synthase subunit b (179 aa).

The chain crosses the membrane as a helical span at residues 23-43 (IVVGLVAFGLLAFVLMKFVFP).

The protein belongs to the ATPase B chain family. In terms of assembly, F-type ATPases have 2 components, F(1) - the catalytic core - and F(0) - the membrane proton channel. F(1) has five subunits: alpha(3), beta(3), gamma(1), delta(1), epsilon(1). F(0) has three main subunits: a(1), b(2) and c(10-14). The alpha and beta chains form an alternating ring which encloses part of the gamma chain. F(1) is attached to F(0) by a central stalk formed by the gamma and epsilon chains, while a peripheral stalk is formed by the delta and b chains.

The protein localises to the cell membrane. F(1)F(0) ATP synthase produces ATP from ADP in the presence of a proton or sodium gradient. F-type ATPases consist of two structural domains, F(1) containing the extramembraneous catalytic core and F(0) containing the membrane proton channel, linked together by a central stalk and a peripheral stalk. During catalysis, ATP synthesis in the catalytic domain of F(1) is coupled via a rotary mechanism of the central stalk subunits to proton translocation. In terms of biological role, component of the F(0) channel, it forms part of the peripheral stalk, linking F(1) to F(0). This is ATP synthase subunit b from Salinispora arenicola (strain CNS-205).